The chain runs to 341 residues: Sulfate/thiosulfate import ATP-binding protein CysA 2 (341 aa).

The region spanning Ile3–Leu235 is the ABC transporter domain. ATP is bound at residue Gly35–Thr42.

The protein belongs to the ABC transporter superfamily. Sulfate/tungstate importer (TC 3.A.1.6) family. In terms of assembly, the complex is composed of two ATP-binding proteins (CysA), two transmembrane proteins (CysT and CysW) and a solute-binding protein (CysP).

The protein localises to the cell inner membrane. The enzyme catalyses sulfate(out) + ATP + H2O = sulfate(in) + ADP + phosphate + H(+). It carries out the reaction thiosulfate(out) + ATP + H2O = thiosulfate(in) + ADP + phosphate + H(+). In terms of biological role, part of the ABC transporter complex CysAWTP involved in sulfate/thiosulfate import. Responsible for energy coupling to the transport system. This chain is Sulfate/thiosulfate import ATP-binding protein CysA 2, found in Agrobacterium fabrum (strain C58 / ATCC 33970) (Agrobacterium tumefaciens (strain C58)).